A 196-amino-acid chain; its full sequence is uncharacterized protein (196 aa).

A signal peptide spans 1-27 (MSVLSRAVQLAFVALGLCLFFSNLVAA).

It is found in the secreted. This is an uncharacterized protein from Arthroderma benhamiae (strain ATCC MYA-4681 / CBS 112371) (Trichophyton mentagrophytes).